Here is a 492-residue protein sequence, read N- to C-terminus: Tyrosine--tRNA ligase, mitochondrial (492 aa).

Tyr89 is a binding site for L-tyrosine. Residue Asp93 participates in ATP binding. The short motif at 94–103 (PTAQSLHLGN) is the 'HIGH' region element. L-tyrosine-binding residues include Asp133, Tyr239, Gln243, Asp246, and Gln265. Positions 303-307 (KFGKS) match the 'KMSKS' region motif. Lys306 is an ATP binding site.

It belongs to the class-I aminoacyl-tRNA synthetase family. Homodimer.

The protein resides in the mitochondrion matrix. The catalysed reaction is tRNA(Tyr) + L-tyrosine + ATP = L-tyrosyl-tRNA(Tyr) + AMP + diphosphate + H(+). In terms of biological role, catalyzes the attachment of tyrosine to tRNA(Tyr) in a two-step reaction: tyrosine is first activated by ATP to form Tyr-AMP and then transferred to the acceptor end of tRNA(Tyr). In Saccharomyces cerevisiae (strain ATCC 204508 / S288c) (Baker's yeast), this protein is Tyrosine--tRNA ligase, mitochondrial (MSY1).